Reading from the N-terminus, the 267-residue chain is Large ribosomal subunit protein bL9m (267 aa).

Residues 1–52 constitute a mitochondrion transit peptide; that stretch reads MAAPVVTAPGRALLRAGAGRLLRGGVQELLRPRHEGNAPDLACNFSLSQNRG.

This sequence belongs to the bacterial ribosomal protein bL9 family. As to quaternary structure, component of the mitochondrial large ribosomal subunit (mt-LSU). Mature mammalian 55S mitochondrial ribosomes consist of a small (28S) and a large (39S) subunit. The 28S small subunit contains a 12S ribosomal RNA (12S mt-rRNA) and 30 different proteins. The 39S large subunit contains a 16S rRNA (16S mt-rRNA), a copy of mitochondrial valine transfer RNA (mt-tRNA(Val)), which plays an integral structural role, and 52 different proteins.

Its subcellular location is the mitochondrion. The polypeptide is Large ribosomal subunit protein bL9m (MRPL9) (Homo sapiens (Human)).